The sequence spans 272 residues: HMP-PP phosphatase (272 aa).

Aspartate 8 serves as the catalytic Nucleophile. Residues aspartate 8, aspartate 10, and aspartate 212 each contribute to the Mg(2+) site.

Belongs to the HAD-like hydrolase superfamily. Cof family. Mg(2+) serves as cofactor.

It catalyses the reaction 4-amino-2-methyl-5-(diphosphooxymethyl)pyrimidine + H2O = 4-amino-2-methyl-5-(phosphooxymethyl)pyrimidine + phosphate + H(+). Catalyzes the hydrolysis of 4-amino-2-methyl-5-hydroxymethylpyrimidine pyrophosphate (HMP-PP) to 4-amino-2-methyl-5-hydroxymethylpyrimidine phosphate (HMP-P). The chain is HMP-PP phosphatase from Escherichia coli (strain K12 / MC4100 / BW2952).